We begin with the raw amino-acid sequence, 109 residues long: Parvalbumin beta-1 (109 aa).

Position 2 is an N-acetylserine (serine 2). EF-hand domains follow at residues 39–74 (KSHE…FGAG) and 78–109 (LTAA…LVKA). Aspartate 52, aspartate 54, serine 56, phenylalanine 58, glutamate 60, glutamate 63, aspartate 91, aspartate 93, aspartate 95, methionine 97, and glutamate 102 together coordinate Ca(2+).

The protein belongs to the parvalbumin family.

Its function is as follows. In muscle, parvalbumin is thought to be involved in relaxation after contraction. It binds two calcium ions. This Gadus chalcogrammus (Alaska pollock) protein is Parvalbumin beta-1.